Here is a 1000-residue protein sequence, read N- to C-terminus: C2 domain-containing protein 5 (1000 aa).

In terms of domain architecture, C2 spans 1-109 (MPGKLKVKIV…EAATVISGWF (109 aa)). The Ca(2+) site is built by D19, D26, D76, D78, S81, and D84. Position 197 is a phosphoserine; by PKB/AKT2 (S197). 2 positions are modified to phosphoserine: S200 and S260. The segment at 265–330 (MKEIPFNEDP…SGSAGKEGGP (66 aa)) is disordered. A compositionally biased stretch (polar residues) spans 274 to 289 (PNPNTHSSGPSTPLKN). Positions 290-318 (QTYSFSPSKSYSRQSSSSDTDLSLTPKTG) are enriched in low complexity. Phosphoserine occurs at positions 293, 295, 304, 305, and 306. T317 is subject to Phosphothreonine. Over residues 319 to 328 (MGSGSAGKEG) the composition is skewed to gly residues. S323 is subject to Phosphoserine. T601 is modified (phosphothreonine). Positions 639-669 (EIIGSPIPEPRQRSRLLRSQSESSDEVTELD) are disordered. 5 positions are modified to phosphoserine: S643, S657, S659, S661, and S662. T666 is modified (phosphothreonine). A Phosphoserine modification is found at S671. T807 carries the phosphothreonine modification. Phosphoserine is present on residues S817 and S852.

Requires Ca(2+) as cofactor. Phosphorylated on Ser-197 by active myristoylated kinase AKT2; insulin-stimulated phosphorylation by AKT2 regulates SLC2A4/GLUT4 translocation into the plasma membrane.

The protein resides in the cytoplasmic vesicle membrane. Its subcellular location is the cytoplasm. The protein localises to the cell cortex. It is found in the cell membrane. It localises to the cell projection. The protein resides in the ruffle. Functionally, required for insulin-stimulated glucose transport and glucose transporter SLC2A4/GLUT4 translocation from intracellular glucose storage vesicle (GSV) to the plasma membrane (PM) in adipocytes. Binds phospholipid membranes in a calcium-dependent manner and is necessary for the optimal membrane fusion between SLC2A4/GLUT4 GSV and the PM. This chain is C2 domain-containing protein 5 (C2CD5), found in Pongo abelii (Sumatran orangutan).